A 267-amino-acid chain; its full sequence is X-box-binding protein 1 (267 aa).

The Cytoplasmic segment spans residues 1–180; sequence MVVVAAAPSA…VQAQLSPPQN (180 aa). The disordered stretch occupies residues 35-60; sequence VPGPRAAGSEASGTPQARKRQRLTHL. The residue at position 61 (S61) is a Phosphoserine. Positions 63–126 constitute a bZIP domain; sequence EEKALRRKLK…HGLVIENQEL (64 aa). The interval 65–87 is basic motif; the sequence is KALRRKLKNRVAAQTARDRKKAR. Residues 69–85 are nuclear localization signal (NLS); the sequence is RKLKNRVAAQTARDRKK. Positions 91-126 are leucine-zipper; the sequence is LEQQVVDLEEENQKLQLENQLLREKTHGLVIENQEL. Residues 181 to 198 form a helical; Signal-anchor for type II membrane protein membrane-spanning segment; the sequence is IFPWILTLLPLQILSLIS. Topologically, residues 199-267 are lumenal; that stretch reads FWAFWTSWTL…FVLTMYTPSL (69 aa).

This sequence belongs to the bZIP family. Isoform 1 interacts with HM13. Isoform 1 interacts with RNF139; the interaction induces ubiquitination and degradation of isoform 1. Isoform 1 interacts (via luminal domain) with DERL1; the interaction obviates the need for ectodomain shedding prior HM13/SPP-mediated XBP1 isoform 1 cleavage. Isoform 1 interacts with HDAC3 and AKT1; the interactions occur in endothelial cell (EC) under disturbed flow. Isoform 1 interacts with the oncoprotein FOS. Interacts with SIRT1. Isoform 1 is ubiquitinated, leading to proteasome-mediated degradation in response to ER stress. In terms of processing, X-box-binding protein 1, cytoplasmic form and luminal form are produced by intramembrane proteolytic cleavage of ER membrane-anchored isoform 1 triggered by HM13/SPP in a DERL1-RNF139-dependent and VCP/p97-independent manner. X-box-binding protein 1, luminal form is ubiquitinated leading to proteasomal degradation. Post-translationally, acetylated by EP300; acetylation positively regulates the transcriptional activity of XBP1. Deacetylated by SIRT1; deacetylation negatively regulates the transcriptional activity of XBP1.

Its subcellular location is the nucleus. It localises to the endoplasmic reticulum. The protein localises to the cytoplasm. It is found in the endoplasmic reticulum membrane. The protein resides in the membrane. Functions as a transcription factor during endoplasmic reticulum (ER) stress by regulating the unfolded protein response (UPR). Required for cardiac myogenesis and hepatogenesis during embryonic development, and the development of secretory tissues such as exocrine pancreas and salivary gland. Involved in terminal differentiation of B lymphocytes to plasma cells and production of immunoglobulins. Modulates the cellular response to ER stress in a PIK3R-dependent manner. Binds to the cis-acting X box present in the promoter regions of major histocompatibility complex class II genes. Involved in VEGF-induced endothelial cell (EC) proliferation and retinal blood vessel formation during embryonic development but also for angiogenesis in adult tissues under ischemic conditions. Functions also as a major regulator of the UPR in obesity-induced insulin resistance and type 2 diabetes for the management of obesity and diabetes prevention. Functionally, acts as a weak transcriptional factor. Together with HDAC3, contributes to the activation of NFE2L2-mediated HMOX1 transcription factor gene expression in a PI(3)K/mTORC2/Akt-dependent signaling pathway leading to EC survival under disturbed flow/oxidative stress. Binds to the ER stress response element (ERSE) upon ER stress. Binds to the consensus 5'-GATGACGTG[TG]N(3)[AT]T-3' sequence related to cAMP responsive element (CRE)-like sequences. Associates preferentially to the HDAC3 gene promoter region in a static flow-dependent manner. Binds to the CDH5/VE-cadherin gene promoter region. The protein is X-box-binding protein 1 of Rattus norvegicus (Rat).